The chain runs to 117 residues: Type II secretion system protein I (117 aa).

Residues 1-6 (MKSKRG) constitute a propeptide, leader sequence. At F7 the chain carries N-methylphenylalanine. The chain crosses the membrane as a helical span at residues 7 to 27 (FTLLEVLVALAIFATAAISVI).

Belongs to the GSP I family. Type II secretion is composed of four main components: the outer membrane complex, the inner membrane complex, the cytoplasmic secretion ATPase and the periplasm-spanning pseudopilus. Interacts with core component EpsG. Cleaved by prepilin peptidase. Post-translationally, methylated by prepilin peptidase at the amino group of the N-terminal phenylalanine once the leader sequence is cleaved by prepilin peptidase.

The protein resides in the cell inner membrane. In terms of biological role, component of the type II secretion system required for the energy-dependent secretion of extracellular factors such as proteases and toxins from the periplasm. Part of the pseudopilus tip complex that is critical for the recognition and binding of secretion substrates. The chain is Type II secretion system protein I (epsI) from Vibrio cholerae serotype O1 (strain ATCC 39315 / El Tor Inaba N16961).